The sequence spans 149 residues: Large ribosomal subunit protein bL9 (149 aa).

Lysine 89 is subject to N6-acetyllysine.

Belongs to the bacterial ribosomal protein bL9 family.

Binds to the 23S rRNA. This chain is Large ribosomal subunit protein bL9, found in Shigella dysenteriae serotype 1 (strain Sd197).